The primary structure comprises 240 residues: Purine nucleoside phosphorylase RC0672 (240 aa).

Zn(2+) contacts are provided by histidine 60, cysteine 96, and histidine 113.

It belongs to the purine nucleoside phosphorylase YfiH/LACC1 family. In terms of assembly, homodimer. Cu(2+) is required as a cofactor. Requires Zn(2+) as cofactor.

The enzyme catalyses adenosine + phosphate = alpha-D-ribose 1-phosphate + adenine. It carries out the reaction S-methyl-5'-thioadenosine + phosphate = 5-(methylsulfanyl)-alpha-D-ribose 1-phosphate + adenine. The catalysed reaction is inosine + phosphate = alpha-D-ribose 1-phosphate + hypoxanthine. It catalyses the reaction adenosine + H2O + H(+) = inosine + NH4(+). In terms of biological role, purine nucleoside enzyme that catalyzes the phosphorolysis of adenosine and inosine nucleosides, yielding D-ribose 1-phosphate and the respective free bases, adenine and hypoxanthine. Also catalyzes the phosphorolysis of S-methyl-5'-thioadenosine into adenine and S-methyl-5-thio-alpha-D-ribose 1-phosphate. Also has adenosine deaminase activity. This chain is Purine nucleoside phosphorylase RC0672, found in Rickettsia conorii (strain ATCC VR-613 / Malish 7).